The sequence spans 333 residues: Tetraacyldisaccharide 4'-kinase (333 aa).

55-62 lines the ATP pocket; it reads TIGGNGKT.

Belongs to the LpxK family.

The enzyme catalyses a lipid A disaccharide + ATP = a lipid IVA + ADP + H(+). The protein operates within glycolipid biosynthesis; lipid IV(A) biosynthesis; lipid IV(A) from (3R)-3-hydroxytetradecanoyl-[acyl-carrier-protein] and UDP-N-acetyl-alpha-D-glucosamine: step 6/6. Its function is as follows. Transfers the gamma-phosphate of ATP to the 4'-position of a tetraacyldisaccharide 1-phosphate intermediate (termed DS-1-P) to form tetraacyldisaccharide 1,4'-bis-phosphate (lipid IVA). This chain is Tetraacyldisaccharide 4'-kinase, found in Blochmanniella floridana.